The chain runs to 68 residues: MIYQPRQTIWVSQKVFPTSQGDGGFLKGCLPISKEVNRKKESEVEGACWAPVNGDGHHFTKINYLYTF.

This is Neuronal regeneration-related protein (NREP) from Gallus gallus (Chicken).